A 720-amino-acid polypeptide reads, in one-letter code: Beta-glucan synthesis-associated protein KRE6 (720 aa).

3 stretches are compositionally biased toward polar residues: residues 1-17, 31-51, and 69-90; these read MPLR…STNL, LSSS…NAGL, and SLSS…HDNS. Residues 1–90 form a disordered region; it reads MPLRNLTETH…SDSSLLHDNS (90 aa). Over 1–252 the chain is Cytoplasmic; sequence MPLRNLTETH…KYMDKRSASG (252 aa). Residues Ser-81, Ser-116, Ser-133, Ser-134, Ser-136, and Ser-139 each carry the phosphoserine modification. Disordered stretches follow at residues 117 to 142 and 167 to 189; these read TAND…SNLS and QLNH…SFSS. A compositionally biased stretch (low complexity) spans 133 to 142; that stretch reads SSPSLNSNLS. Residues 253–273 traverse the membrane as a helical; Signal-anchor for type II membrane protein segment; the sequence is LAGVLLLFLAAIFIFIVLPAL. At 274–720 the chain is on the lumenal side; the sequence is TFTGAIDHES…CTSSKFKLSS (447 aa). The GH16 domain occupies 289–664; sequence TYLTQYQYPQ…YVRIYQPSNA (376 aa). Asn-374, Asn-461, Asn-538, Asn-563, and Asn-691 each carry an N-linked (GlcNAc...) asparagine glycan.

It belongs to the SKN1/KRE6 family. In terms of assembly, the cytoplasmic domain interacts with the actin patch assembly proteins LAS17 and SLA1. Interacts with KEG1.

It localises to the golgi apparatus membrane. In terms of biological role, involved in the synthesis of (1-&gt;6)- and (1-&gt;3)-beta-D-glucan polymers of the yeast cell wall in vivo. It is required for full activity of beta-glucan synthase in vitro. May be involved in the maturation and transport of cell wall proteins (CWP) to the cell wall. May act as a transglucosidase and contribute to the construction of a protein-bound glucan-structure that acts as an acceptor site for the addition of (1-&gt;6)-beta-D-glucan at the cell surface. The protein is Beta-glucan synthesis-associated protein KRE6 (KRE6) of Saccharomyces cerevisiae (strain ATCC 204508 / S288c) (Baker's yeast).